A 116-amino-acid polypeptide reads, in one-letter code: Ly-6/neurotoxin-like protein 1 (116 aa).

The signal sequence occupies residues 1-20 (MTHLLTVFLVALMGLPVAQA). The UPAR/Ly6 domain maps to 21-104 (LECHVCAYNG…GFATPVTLAL (84 aa)). 5 disulfides stabilise this stretch: Cys23–Cys46, Cys26–Cys33, Cys39–Cys64, Cys68–Cys85, and Cys86–Cys91. Asn92 carries GPI-anchor amidated asparagine lipidation. The propeptide at 93-116 (GAGFATPVTLALVPALLATFWSLL) is removed in mature form.

As to quaternary structure, interacts with nAChRs containing alpha-4:beta-2 (CHRNA4:CHRNB2) and alpha-7 (CHRNA7) subunits. Interacts with CHRNA4 probably in the endoplasmic reticulum prior to nAChR pentameric assembly. Interacts with KCNA2/Potassium voltage-gated channel subfamily A member 2. As to expression, expressed in neurons of multiple regions in the CNS, including the cerebral cortex, thalamus, substantia nigra, cerebellum, amygdala and hippocampus. Also expressed in kidney, heart and thymus, but at lower levels than in the brain. Expressed in the primary visual cortex (V1) and the lateral geniculate nucleus (at protein level).

The protein resides in the cell membrane. It localises to the cell projection. Its subcellular location is the dendrite. It is found in the endoplasmic reticulum. Its function is as follows. Acts in different tissues through interaction to nicotinic acetylcholine receptors (nAChRs). The proposed role as modulator of nAChR activity seems to be dependent on the nAChR subtype and stoichiometry, and to involve an effect on nAChR trafficking and its cell surface expression, and on single channel properties of the nAChR inserted in the plasma membrane. Modulates functional properties of nicotinic acetylcholine receptors (nAChRs) to prevent excessive excitation, and hence neurodegeneration. Enhances desensitization by increasing both the rate and extent of desensitization of alpha-4:beta-2-containing nAChRs and slowing recovery from desensitization. Promotes large amplitude ACh-evoked currents through alpha-4:beta-2 nAChRs. Is involved in regulation of the nAChR pentameric assembly in the endoplasmic reticulum. Shifts stoichiometry from high sensitivity alpha-4(2):beta-2(3) to low sensitivity alpha-4(3):beta-2(2) nAChR. In vitro modulates alpha-3:beta-4-containing nAChRs. Reduces cell surface expression of (alpha-3:beta-4)(2):beta-4 and (alpha-3:beta-4)(2):alpha-5 nAChRs suggesting an interaction with nAChR alpha-3(-):(+)beta-4 subunit interfaces and an allosteric mode. Corresponding single channel effects characterized by decreased unitary conductance, altered burst proportions and enhanced desensitization/inactivation seem to depend on nAChR alpha:alpha subunit interfaces and are greater in (alpha-3:beta-2)(2):alpha-3 when compared to (alpha-3:beta-2)(2):alpha-5 nAChRs. Prevents plasticity in the primary visual cortex late in life. In Mus musculus (Mouse), this protein is Ly-6/neurotoxin-like protein 1.